A 565-amino-acid chain; its full sequence is MDSSPVTYSGEPPYKLRRLSPSYPYVSKLRERCASKIETLSEGSARDSLEEEDVSEAMATGAFLATRLYLPSVLPQRITTLTFLDHFKKSRPLPNSDKRLNPIFYRLAYIRDLVGEMELEGIVERGTASRLLGASSPAGFVAGTYTHARDLSKTMSLASVRDAVLAIEAQTRDQSESQLWALLRRGLATASTMKWGALGPQYHPQWCEVSTNAKGIPNNPALQFGQTNERTARSLISALYVARSEAATPDLLVDPGCGQCFVFDESASVPGDAYACGLLMDARTGVVGASLDMLVCDRDPSGVLSPHSTQTTLDFFEIKCRAKYLFDPDLFSPVATAYANLLKHRTAVCLRKFLRSIKNPAVEYFASTSVPGATEALITCNSSWKPREVNETNRRCGDFDRDHIALNLDASSDVWLFSEPDLESETITPARWDTGELALSVPVFANPRHPNFKQILVQAYVLSGHFPDHQLRPFLVTFIGRHRKRCEEGKTFTICDRPEGSPYNLNEVVHSSCAIPILLFVTPVIVDREGCWEDIEIESLTAFNKTADAIWDSDSPADVSEPTSS.

It belongs to the herpesviridae alkaline nuclease family. As to quaternary structure, interacts with major DNA-binding protein; this interaction increases the nuclease processivity of the alkaline exonuclease.

It localises to the host nucleus. Its subcellular location is the host cytoplasm. In terms of biological role, plays a role in processing non linear or branched viral DNA intermediates in order to promote the production of mature packaged unit-length linear progeny viral DNA molecules. Exhibits endonuclease and exonuclease activities and accepts both double-stranded and single-stranded DNA as substrate. Exonuclease digestion of DNA is in the 5'-&gt; 3' direction and the products are 5'-monophosphate nucleosides. Additionally, forms a recombinase with the major DNA-binding protein, which displays strand exchange activity. The chain is Alkaline nuclease from Equine herpesvirus 1 (strain V592) (EHV-1).